We begin with the raw amino-acid sequence, 150 residues long: D-aminoacyl-tRNA deacylase (150 aa).

Residues 138 to 139 carry the Gly-cisPro motif, important for rejection of L-amino acids motif; sequence GP.

Belongs to the DTD family. In terms of assembly, homodimer.

The protein localises to the cytoplasm. It catalyses the reaction glycyl-tRNA(Ala) + H2O = tRNA(Ala) + glycine + H(+). The enzyme catalyses a D-aminoacyl-tRNA + H2O = a tRNA + a D-alpha-amino acid + H(+). Its function is as follows. An aminoacyl-tRNA editing enzyme that deacylates mischarged D-aminoacyl-tRNAs. Also deacylates mischarged glycyl-tRNA(Ala), protecting cells against glycine mischarging by AlaRS. Acts via tRNA-based rather than protein-based catalysis; rejects L-amino acids rather than detecting D-amino acids in the active site. By recycling D-aminoacyl-tRNA to D-amino acids and free tRNA molecules, this enzyme counteracts the toxicity associated with the formation of D-aminoacyl-tRNA entities in vivo and helps enforce protein L-homochirality. In Flavobacterium johnsoniae (strain ATCC 17061 / DSM 2064 / JCM 8514 / BCRC 14874 / CCUG 350202 / NBRC 14942 / NCIMB 11054 / UW101) (Cytophaga johnsonae), this protein is D-aminoacyl-tRNA deacylase.